Reading from the N-terminus, the 195-residue chain is dITP/XTP pyrophosphatase (195 aa).

Substrate is bound at residue 8–13; sequence TNNQGK. 2 residues coordinate Mg(2+): Glu-39 and Asp-68. Residue Asp-68 is the Proton acceptor of the active site. Substrate contacts are provided by residues Ser-69, 149–152, Lys-172, and 177–178; these read FGYD and HR.

The protein belongs to the HAM1 NTPase family. As to quaternary structure, homodimer. Requires Mg(2+) as cofactor.

It carries out the reaction XTP + H2O = XMP + diphosphate + H(+). The catalysed reaction is dITP + H2O = dIMP + diphosphate + H(+). It catalyses the reaction ITP + H2O = IMP + diphosphate + H(+). Functionally, pyrophosphatase that catalyzes the hydrolysis of nucleoside triphosphates to their monophosphate derivatives, with a high preference for the non-canonical purine nucleotides XTP (xanthosine triphosphate), dITP (deoxyinosine triphosphate) and ITP. Seems to function as a house-cleaning enzyme that removes non-canonical purine nucleotides from the nucleotide pool, thus preventing their incorporation into DNA/RNA and avoiding chromosomal lesions. This chain is dITP/XTP pyrophosphatase, found in Staphylococcus epidermidis (strain ATCC 12228 / FDA PCI 1200).